The primary structure comprises 497 residues: Probable gamma-aminobutyrate transaminase 2, mitochondrial (497 aa).

Residues 1-37 (MNLIKHAAFAASFQGETDCTSHASARKFSTSGSSPLL) constitute a mitochondrion transit peptide. 153-154 (GS) is a pyridoxal 5'-phosphate binding site. Residue Tyr186 participates in substrate binding. Asp293 lines the pyridoxal 5'-phosphate pocket. Position 322 (Lys322) interacts with substrate. Lys322 carries the post-translational modification N6-(pyridoxal phosphate)lysine.

Belongs to the class-III pyridoxal-phosphate-dependent aminotransferase family.

It localises to the mitochondrion. It catalyses the reaction 4-aminobutanoate + pyruvate = succinate semialdehyde + L-alanine. It carries out the reaction 4-aminobutanoate + glyoxylate = succinate semialdehyde + glycine. In terms of biological role, transaminase that degrades gamma-amino butyric acid (GABA). The sequence is that of Probable gamma-aminobutyrate transaminase 2, mitochondrial from Oryza sativa subsp. indica (Rice).